A 256-amino-acid polypeptide reads, in one-letter code: uncharacterized protein (256 aa).

The protein belongs to the methyltransferase superfamily.

It localises to the cytoplasm. The protein localises to the nucleus. Probable methyltransferase. This is an uncharacterized protein from Schizosaccharomyces pombe (strain 972 / ATCC 24843) (Fission yeast).